Here is a 189-residue protein sequence, read N- to C-terminus: UPF0301 protein RPR_01165 (189 aa).

It belongs to the UPF0301 (AlgH) family.

This is UPF0301 protein RPR_01165 from Rickettsia peacockii (strain Rustic).